We begin with the raw amino-acid sequence, 1403 residues long: Envelopment polyprotein (1403 aa).

Residues 1-17 (MLLNIVLISNLACLAFA) form the signal peptide. Residues 18–209 (LPLKEGTRGS…ELMIESFCTN (192 aa)) lie on the Lumenal side of the membrane. A glycan (N-linked (GlcNAc...) asparagine; by host) is linked at asparagine 40. The helical transmembrane segment at 210-230 (LELILLVTFILVGSVMMMILT) threads the bilayer. The Cytoplasmic segment spans residues 231–314 (KTYIVYVFIP…PKTRKLCKSK (84 aa)). Residues 315-335 (ISNIVLCVITSLIFFSFITPI) traverse the membrane as a helical segment. The Lumenal portion of the chain corresponds to 336-361 (SSQCIDIEKLPDEYITCKRELANIKS). The helical transmembrane segment at 362-382 (LTIDDTYSFIYSCTCIIVLIL) threads the bilayer. The Cytoplasmic segment spans residues 383–448 (LKKAAKYILY…FKFESSYNRT (66 aa)). Residues 449–469 (GLIIFMLLLVPTIVMTQETSI) form a helical membrane-spanning segment. Residues 470–1361 (NCKNIQSTQL…GNLSFYWRLT (892 aa)) lie on the Lumenal side of the membrane. A disulfide bond links cysteine 471 and cysteine 487. N-linked (GlcNAc...) asparagine; by host glycosylation occurs at asparagine 493. Cystine bridges form between cysteine 523/cysteine 550, cysteine 580/cysteine 589, and cysteine 591/cysteine 598. 2 N-linked (GlcNAc...) asparagine; by host glycosylation sites follow: asparagine 686 and asparagine 1353. A helical transmembrane segment spans residues 1362 to 1382 (IYIIISLIMLILFLYILIPLC). Topologically, residues 1383–1403 (KRLKGLLEYNERIYQMENKFK) are cytoplasmic.

It belongs to the nairovirus envelope glycoprotein family. In terms of assembly, heterodimer with glycoprotein C; in prefusion state. Heterodimer with glycoprotein N; in prefusion state. Homotrimeric; in postfusion state. Specific enzymatic cleavage by host MBTPS1/S1P/SKI-1 endopeptidase yield glycoprotein N. Specific enzymatic cleavages by host furin-like protease and MBTPS1/S1P endopeptidase yield GP38. Post-translationally, glycosylated.

It is found in the host endoplasmic reticulum membrane. The protein resides in the virion membrane. It localises to the host Golgi apparatus membrane. Its function is as follows. Glycoprotein C and glycoprotein N interact with each other and are present at the surface of the virion. Glycoprotein N probably locks the Gn-Gc complex in a prefusion state. Glycoprotein N and glycoprotein C are able to attach the virion to host cell receptors. This attachment induces virion internalization predominantly through clathrin-dependent endocytosis. In terms of biological role, glycoprotein C and glycoprotein N interact with each other and are present at the surface of the virion. The spikes at the surface of the virion are formed by an N-terminal extension of glycoprotein C. Glycoprotein N and glycoprotein C are able to attach the virion to host cell receptors. This attachment induces virion internalization predominantly through clathrin-dependent endocytosis. Class II fusion protein that promotes fusion of viral membrane with host endosomal membrane after endocytosis of the virion. Exposure to potassium is necessary for the conformational change leading to fusion. The protein is Envelopment polyprotein (GP) of Bos taurus (Bovine).